The primary structure comprises 248 residues: tRNA (guanine-N(1)-)-methyltransferase (248 aa).

Residues G113 and 133-138 contribute to the S-adenosyl-L-methionine site; that span reads IGDYVL. The interval 227–248 is disordered; it reads RPAQTIRAKGESQKTPKNKTDG. Basic and acidic residues predominate over residues 234 to 248; sequence AKGESQKTPKNKTDG.

It belongs to the RNA methyltransferase TrmD family. In terms of assembly, homodimer.

The protein resides in the cytoplasm. It carries out the reaction guanosine(37) in tRNA + S-adenosyl-L-methionine = N(1)-methylguanosine(37) in tRNA + S-adenosyl-L-homocysteine + H(+). In terms of biological role, specifically methylates guanosine-37 in various tRNAs. The polypeptide is tRNA (guanine-N(1)-)-methyltransferase (Rhodopseudomonas palustris (strain TIE-1)).